We begin with the raw amino-acid sequence, 603 residues long: DNA-directed RNA polymerase subunit beta' N-terminal section (603 aa).

Residues C283, C285, C329, and C332 each contribute to the Zn(2+) site.

This sequence belongs to the RNA polymerase beta' chain family. RpoC1 subfamily. As to quaternary structure, in plastids the minimal PEP RNA polymerase catalytic core is composed of four subunits: alpha, beta, beta', and beta''. When a (nuclear-encoded) sigma factor is associated with the core the holoenzyme is formed, which can initiate transcription. Zn(2+) serves as cofactor.

Its subcellular location is the plastid. The protein localises to the chloroplast. It carries out the reaction RNA(n) + a ribonucleoside 5'-triphosphate = RNA(n+1) + diphosphate. Functionally, DNA-dependent RNA polymerase catalyzes the transcription of DNA into RNA using the four ribonucleoside triphosphates as substrates. This is DNA-directed RNA polymerase subunit beta' N-terminal section (rpoC1A) from Chlamydomonas reinhardtii (Chlamydomonas smithii).